Reading from the N-terminus, the 81-residue chain is Short neurotoxin 1 (81 aa).

The N-terminal stretch at 1–21 (MKTLLLTLVVVTIVCLDLGYT) is a signal peptide. Cystine bridges form between Cys24–Cys43, Cys38–Cys60, Cys62–Cys73, and Cys74–Cys79.

The protein belongs to the three-finger toxin family. Short-chain subfamily. Type I alpha-neurotoxin sub-subfamily. Expressed by the venom gland.

The protein localises to the secreted. In terms of biological role, binds to muscle nicotinic acetylcholine receptor (nAChR) and inhibit acetylcholine from binding to the receptor, thereby impairing neuromuscular transmission. This Austrelaps superbus (Lowland copperhead snake) protein is Short neurotoxin 1.